Consider the following 136-residue polypeptide: C-type natriuretic peptide prohormone (136 aa).

Residues 1–21 (MSGQTSFYCGLLLVLLIQAQA) form the signal peptide. Cysteine 120 and cysteine 136 form a disulfide bridge.

This sequence belongs to the natriuretic peptide family. CNP-115 is differentially processed to produce CNP-38 and CNP-39 in the heart and CNP-22 in the brain.

It is found in the secreted. Functionally, hormone which may be vasoactive and natriuretic. Has a cGMP-stimulating activity. This chain is C-type natriuretic peptide prohormone, found in Triakis scyllium (Banded houndshark).